The primary structure comprises 366 residues: RISC-loading complex subunit TARBP2 (366 aa).

Sufficient for interaction with PRKRA stretches follow at residues 22–105 (MLAA…EPAL), 152–234 (SPQQ…DARD), and 287–366 (LGAL…AGSK). One can recognise a DRBM 1 domain in the interval 30 to 97 (TPISLLQEYG…AEVALKHLKG (68 aa)). Positions 135 to 158 (PSAVPTRSSPMEVQPPVSPQQSEC) are disordered. Ser-152 bears the Phosphoserine mark. DRBM domains follow at residues 159–227 (NPVG…RVHT) and 293–361 (ACCS…YLKI). The sufficient for interaction with DICER1 stretch occupies residues 228 to 366 (VPLDARDGNE…QYLKIMAGSK (139 aa)).

It belongs to the TARBP2 family. Self-associates. Component of the RISC loading complex (RLC), or micro-RNA (miRNA) loading complex (miRLC), which is composed of DICER1, AGO2 and TARBP2. Note that the trimeric RLC/miRLC is also referred to as RISC. Interacts with EIF2AK2/PKR and inhibits its protein kinase activity. Interacts with DHX9 and PRKRA. Interacts with DICER1, AGO2, MOV10, EIF6 and RPL7A (60S ribosome subunit); they form a large RNA-induced silencing complex (RISC). Interacts with IRF7; this interaction prevents IRF7 phosphorylation and activation.

Its subcellular location is the cytoplasm. It localises to the perinuclear region. The protein resides in the nucleus. Required for formation of the RNA induced silencing complex (RISC). Component of the RISC loading complex (RLC), also known as the micro-RNA (miRNA) loading complex (miRLC), which is composed of DICER1, AGO2 and TARBP2. Within the RLC/miRLC, DICER1 and TARBP2 are required to process precursor miRNAs (pre-miRNAs) to mature miRNAs and then load them onto AGO2. AGO2 bound to the mature miRNA constitutes the minimal RISC and may subsequently dissociate from DICER1 and TARBP2. May also play a role in the production of short interfering RNAs (siRNAs) from double-stranded RNA (dsRNA) by DICER1. Binds in vitro to the PRM1 3'-UTR. Seems to act as a repressor of translation. For some pre-miRNA substrates, may also alter the choice of cleavage site by DICER1. Negatively regulates IRF7-mediated IFN-beta signaling triggered by viral infection by inhibiting the phosphorylation of IRF7 and promoting its 'Lys'-48-linked ubiquitination and degradation. The protein is RISC-loading complex subunit TARBP2 of Bos taurus (Bovine).